The following is a 197-amino-acid chain: dTTP/UTP pyrophosphatase (197 aa).

The active-site Proton acceptor is D70.

It belongs to the Maf family. YhdE subfamily. Requires a divalent metal cation as cofactor.

It localises to the cytoplasm. It carries out the reaction dTTP + H2O = dTMP + diphosphate + H(+). The enzyme catalyses UTP + H2O = UMP + diphosphate + H(+). Its function is as follows. Nucleoside triphosphate pyrophosphatase that hydrolyzes dTTP and UTP. May have a dual role in cell division arrest and in preventing the incorporation of modified nucleotides into cellular nucleic acids. This chain is dTTP/UTP pyrophosphatase (yhdE), found in Escherichia coli O157:H7.